The sequence spans 89 residues: Cornifin-A (89 aa).

Residues 1–29 (MNSQQQKQPCTPPPQPQQQQVKQPCQPPP) form a disordered region. A run of 8 repeats spans residues 3-14 (SQQQKQPCTPPP), 18-29 (QQQVKQPCQPPP), 31-38 (EPCIPKTK), 39-46 (EPCHPKVP), 47-54 (EPCHPKVP), 55-62 (EPCQPKVP), 63-70 (EPCQPKVP), and 71-78 (EPCPSTVT). The 2 X 12 AA approximate repeats stretch occupies residues 3-29 (SQQQKQPCTPPPQPQQQQVKQPCQPPP). The segment at 31 to 78 (EPCIPKTKEPCHPKVPEPCHPKVPEPCQPKVPEPCQPKVPEPCPSTVT) is 6 X 8 AA approximate tandem repeats. A disordered region spans residues 68–89 (KVPEPCPSTVTPAPAQQKTKQK). The segment covering 75 to 89 (STVTPAPAQQKTKQK) has biased composition (polar residues).

The protein belongs to the cornifin (SPRR) family.

The protein localises to the cytoplasm. Functionally, cross-linked envelope protein of keratinocytes. It is a keratinocyte protein that first appears in the cell cytosol, but ultimately becomes cross-linked to membrane proteins by transglutaminase. All that results in the formation of an insoluble envelope beneath the plasma membrane. This Homo sapiens (Human) protein is Cornifin-A (SPRR1A).